The sequence spans 398 residues: Histidinol dehydrogenase (398 aa).

Positions 114, 176, and 199 each coordinate NAD(+). Residues T222, Q244, and H247 each contribute to the substrate site. Zn(2+) is bound by residues Q244 and H247. Residues E298 and H299 each act as proton acceptor in the active site. Substrate is bound by residues H299, D331, E384, and H389. D331 lines the Zn(2+) pocket. Residue H389 coordinates Zn(2+).

This sequence belongs to the histidinol dehydrogenase family. Zn(2+) serves as cofactor.

It catalyses the reaction L-histidinol + 2 NAD(+) + H2O = L-histidine + 2 NADH + 3 H(+). Its pathway is amino-acid biosynthesis; L-histidine biosynthesis; L-histidine from 5-phospho-alpha-D-ribose 1-diphosphate: step 9/9. In terms of biological role, catalyzes the sequential NAD-dependent oxidations of L-histidinol to L-histidinaldehyde and then to L-histidine. In Saccharolobus solfataricus (strain ATCC 35092 / DSM 1617 / JCM 11322 / P2) (Sulfolobus solfataricus), this protein is Histidinol dehydrogenase (hisD).